The chain runs to 188 residues: UPF0488 protein C8orf33 homolog (188 aa).

Disordered regions lie at residues 1–65 (MAAP…AEAQ), 87–112 (QRPTPKQKEQALGAIRTLRSQRTPLP), and 144–182 (AHSAQVQPVGEAARKKSRRVCRPRPEGRSKGTSDTRDEE). Ala-2 bears the N-acetylalanine mark. Ser-41 carries the post-translational modification Phosphoserine. Basic and acidic residues predominate over residues 166-182 (PRPEGRSKGTSDTRDEE).

Belongs to the UPF0488 family.

The sequence is that of UPF0488 protein C8orf33 homolog from Bos taurus (Bovine).